A 464-amino-acid chain; its full sequence is Formin-like protein 19 (464 aa).

Residues 1 to 74 (MSLVDISGAY…PRPCSRPPKT (74 aa)) are disordered. Residues 14-70 (PLPPPPPPLMRRRAPLPPPPPPPLMRRRAPPPPPPPLMRRRAPPPPPPPPLPRPCSR) show a composition bias toward pro residues. In terms of domain architecture, FH2 spans 68 to 462 (CSRPPKTKCS…KAAKEAEMEK (395 aa)).

It belongs to the formin-like family. Class-II subfamily.

This Arabidopsis thaliana (Mouse-ear cress) protein is Formin-like protein 19 (FH19).